Reading from the N-terminus, the 473-residue chain is Bactericidal permeability-increasing protein (473 aa).

Positions 1 to 18 (MVLCCWLALVALIPMTLS) are cleaved as a signal peptide. The tract at residues 19-29 (INPGVKVRLTG) is central sheet, part 1. The N-terminal barrel stretch occupies residues 28–209 (TGKGLEYGRQ…SDLNPQLKTL (182 aa)). A disulfide bond links cysteine 153 and cysteine 192. The central sheet, part 2 stretch occupies residues 211–275 (VLAKVDQYAE…INNMLYISVS (65 aa)). Residues 225 to 230 (MVSSPT) form a cleavage sites for elastase region. The segment at 276–446 (AFTINSAAFV…LAKGYPLPTL (171 aa)) is C-terminal barrel. Residue asparagine 365 is glycosylated (N-linked (GlcNAc...) asparagine). Residues 453–472 (NTELQVLKDYMLIGTDVQFT) are central sheet, part 3.

The protein belongs to the BPI/LBP/Plunc superfamily. BPI/LBP family. As to quaternary structure, monomer. Homodimer; disulfide-linked. In terms of tissue distribution, expressed in spleen. Lower expression in gill, head kidney, entire kidney, skin, intestine and blood and lowest expression in liver and muscle.

The protein localises to the secreted. In terms of biological role, the cytotoxic action of BPI is limited to many species of Gram-negative bacteria; this specificity may be explained by a strong affinity of the very basic N-terminal half for the negatively charged lipopolysaccharides that are unique to the Gram-negative bacterial outer envelope. Exhibits neutralizing capacity towards P.aeruginosa lipopolysaccharides (LPS) and has bactericidal activity against multiple drug resistant (MDR) P.aeruginosa strains derived from people with cystic fibrosis. Has antibacterial activity against E.coli, but not against S.iniae. The sequence is that of Bactericidal permeability-increasing protein from Sebastes schlegelii (Korean rockfish).